Reading from the N-terminus, the 481-residue chain is MELRNKKISLDDFMSERFHVLKTWHTGKDVENFEDGVKYQQTIPESKNFARALFEADCNGITLSQPRAGVALIEEHIELLKTLQKDCDLLPTTIDAYTRLNRYEEAAVGIQKSIEAGTSKLNGLPVVNHGVKACRRITESLSKPLQIRHGTPDARLLAEIAMASGFTSYEGGGISYNIPYAKRVTLEKSIRDWQYCDRLIGVYEEHGIRINREPFGPLTGTLIPPFVSHAVAIIEGLLALEQGVKSVTVGYGQVGNIVQDIAAIQSLRELAHEYFRANGYENYELSTVFHQWMGGFPEDESRAFAVISWGAAVAGMAGATKVITKSPHEAYGIPTAEANGQGLRASNQMLNMVRDQKFPPCVEVDREVALIKREVRAVMDKVLELGQGDIAIGTVRAFEAGVLDVPFAPATCNSGKMMPIRDNHGAIRVFDPGSVPLPKDVLTLHHDFIAERAKEEGRIPSFQMIIDDINAVSHSKLIGRP.

L-glutamate is bound at residue R67. G69 contacts adenosylcob(III)alamin. R99 contributes to the L-glutamate binding site. N122 is a binding site for adenosylcob(III)alamin. L-glutamate-binding positions include 148–149, E170, and Y176; that span reads RH. P179 contributes to the adenosylcob(III)alamin binding site. Y180 serves as a coordination point for L-glutamate. Residues F296, K325, E329, and I333 each contribute to the adenosylcob(III)alamin site.

It belongs to the methylaspartate mutase GlmE subunit family. Heterotetramer composed of 2 epsilon subunits (GlmE) and 2 sigma subunits (GlmS). GlmE exists as a homodimer and GlmS as a monomer. Adenosylcob(III)alamin serves as cofactor.

The catalysed reaction is (2S,3S)-3-methyl-L-aspartate = L-glutamate. It functions in the pathway amino-acid degradation; L-glutamate degradation via mesaconate pathway; acetate and pyruvate from L-glutamate: step 1/4. Its function is as follows. Catalyzes the carbon skeleton rearrangement of L-glutamate to L-threo-3-methylaspartate ((2S,3S)-3-methylaspartate). The protein is Glutamate mutase epsilon subunit of Yersinia enterocolitica serotype O:8 / biotype 1B (strain NCTC 13174 / 8081).